A 298-amino-acid polypeptide reads, in one-letter code: Aspartate carbamoyltransferase catalytic subunit (298 aa).

Carbamoyl phosphate is bound by residues Arg53 and Thr54. Lys81 is a binding site for L-aspartate. 3 residues coordinate carbamoyl phosphate: Arg103, His132, and Gln135. The L-aspartate site is built by Arg166 and Arg218. Carbamoyl phosphate is bound by residues Gly259 and Pro260.

This sequence belongs to the aspartate/ornithine carbamoyltransferase superfamily. ATCase family. As to quaternary structure, heterododecamer (2C3:3R2) of six catalytic PyrB chains organized as two trimers (C3), and six regulatory PyrI chains organized as three dimers (R2).

It catalyses the reaction carbamoyl phosphate + L-aspartate = N-carbamoyl-L-aspartate + phosphate + H(+). The protein operates within pyrimidine metabolism; UMP biosynthesis via de novo pathway; (S)-dihydroorotate from bicarbonate: step 2/3. Its function is as follows. Catalyzes the condensation of carbamoyl phosphate and aspartate to form carbamoyl aspartate and inorganic phosphate, the committed step in the de novo pyrimidine nucleotide biosynthesis pathway. In Anaplasma marginale (strain St. Maries), this protein is Aspartate carbamoyltransferase catalytic subunit.